A 218-amino-acid chain; its full sequence is Phosphoglycolate phosphatase (218 aa).

D7 functions as the Nucleophile in the catalytic mechanism. The Mg(2+) site is built by D7, D9, and D167.

This sequence belongs to the HAD-like hydrolase superfamily. CbbY/CbbZ/Gph/YieH family. Mg(2+) is required as a cofactor.

It carries out the reaction 2-phosphoglycolate + H2O = glycolate + phosphate. The protein operates within organic acid metabolism; glycolate biosynthesis; glycolate from 2-phosphoglycolate: step 1/1. Specifically catalyzes the dephosphorylation of 2-phosphoglycolate. Is involved in the dissimilation of the intracellular 2-phosphoglycolate formed during the DNA repair of 3'-phosphoglycolate ends, a major class of DNA lesions induced by oxidative stress. The polypeptide is Phosphoglycolate phosphatase (Cereibacter sphaeroides (strain ATCC 17025 / ATH 2.4.3) (Rhodobacter sphaeroides)).